Here is a 412-residue protein sequence, read N- to C-terminus: 8-amino-7-oxononanoate synthase (412 aa).

Arginine 28 serves as a coordination point for substrate. Residue glycine 115–tyrosine 116 participates in pyridoxal 5'-phosphate binding. Residue histidine 140 participates in substrate binding. Positions 186, 214, and 246 each coordinate pyridoxal 5'-phosphate. Lysine 249 carries the N6-(pyridoxal phosphate)lysine modification. Threonine 367 contributes to the substrate binding site.

This sequence belongs to the class-II pyridoxal-phosphate-dependent aminotransferase family. BioF subfamily. As to quaternary structure, homodimer. It depends on pyridoxal 5'-phosphate as a cofactor.

The enzyme catalyses 6-carboxyhexanoyl-[ACP] + L-alanine + H(+) = (8S)-8-amino-7-oxononanoate + holo-[ACP] + CO2. Its pathway is cofactor biosynthesis; biotin biosynthesis. In terms of biological role, catalyzes the decarboxylative condensation of pimeloyl-[acyl-carrier protein] and L-alanine to produce 8-amino-7-oxononanoate (AON), [acyl-carrier protein], and carbon dioxide. This chain is 8-amino-7-oxononanoate synthase, found in Paracidovorax citrulli (strain AAC00-1) (Acidovorax citrulli).